A 105-amino-acid chain; its full sequence is Antithrombin-III (105 aa).

The first 17 residues, 1-17 (MHLFIGVSLRPLGHGIP), serve as a signal peptide directing secretion. The tract at residues 38-105 (ICIYRNPEKK…MRRTSSCRPS (68 aa)) is disordered. The span at 43 to 53 (NPEKKPQERRG) shows a compositional bias: basic and acidic residues.

This sequence belongs to the serpin family. In terms of assembly, forms protease inhibiting heterodimer with TMPRSS7. As to expression, plasma.

It localises to the secreted. The protein localises to the extracellular space. Its function is as follows. Most important serine protease inhibitor in plasma that regulates the blood coagulation cascade. AT-III inhibits thrombin, matriptase-3/TMPRSS7, as well as factors IXa, Xa and XIa. Its inhibitory activity is greatly enhanced in the presence of heparin. This chain is Antithrombin-III (SERPINC1), found in Gallus gallus (Chicken).